A 213-amino-acid chain; its full sequence is Orotate phosphoribosyltransferase (213 aa).

5-phospho-alpha-D-ribose 1-diphosphate is bound at residue Lys26. Orotate is bound at residue 34 to 35 (FF). 5-phospho-alpha-D-ribose 1-diphosphate is bound by residues 72–73 (YK), Arg99, Lys100, Lys103, His105, and 124–132 (DDVITAGTA). Thr128 and Arg156 together coordinate orotate.

The protein belongs to the purine/pyrimidine phosphoribosyltransferase family. PyrE subfamily. In terms of assembly, homodimer. It depends on Mg(2+) as a cofactor.

The catalysed reaction is orotidine 5'-phosphate + diphosphate = orotate + 5-phospho-alpha-D-ribose 1-diphosphate. Its pathway is pyrimidine metabolism; UMP biosynthesis via de novo pathway; UMP from orotate: step 1/2. Its function is as follows. Catalyzes the transfer of a ribosyl phosphate group from 5-phosphoribose 1-diphosphate to orotate, leading to the formation of orotidine monophosphate (OMP). The chain is Orotate phosphoribosyltransferase from Cronobacter sakazakii (strain ATCC BAA-894) (Enterobacter sakazakii).